Consider the following 907-residue polypeptide: Aldehyde oxidoreductase (907 aa).

The 78-residue stretch at 2–79 (IQKVITVNGI…GAQITTIEGV (78 aa)) folds into the 2Fe-2S ferredoxin-type domain. Residues C40, C45, C48, C60, C100, C103, C137, and C139 each coordinate [2Fe-2S] cluster. The Mo-molybdopterin cytosine dinucleotide site is built by H653 and E869.

The protein belongs to the xanthine dehydrogenase family. As to quaternary structure, homodimer. The cofactor is Mo-molybdopterin cytosine dinucleotide. [2Fe-2S] cluster is required as a cofactor.

It carries out the reaction an aldehyde + A + H2O = a carboxylate + AH2 + H(+). This is Aldehyde oxidoreductase (mop) from Megalodesulfovibrio gigas (Desulfovibrio gigas).